A 200-amino-acid polypeptide reads, in one-letter code: Proteasome subunit beta 2 (200 aa).

A propeptide (removed in mature form; by autocatalysis) is located at residue Met1. Thr2 serves as the catalytic Nucleophile.

This sequence belongs to the peptidase T1B family. In terms of assembly, the 20S proteasome core is composed of 14 alpha and 14 beta subunits that assemble into four stacked heptameric rings, resulting in a barrel-shaped structure. The two inner rings, each composed of seven catalytic beta subunits, are sandwiched by two outer rings, each composed of seven alpha subunits. The catalytic chamber with the active sites is on the inside of the barrel. Has a gated structure, the ends of the cylinder being occluded by the N-termini of the alpha-subunits. Is capped at one or both ends by the proteasome regulatory ATPase, PAN.

It localises to the cytoplasm. The catalysed reaction is Cleavage of peptide bonds with very broad specificity.. The formation of the proteasomal ATPase PAN-20S proteasome complex, via the docking of the C-termini of PAN into the intersubunit pockets in the alpha-rings, triggers opening of the gate for substrate entry. Interconversion between the open-gate and close-gate conformations leads to a dynamic regulation of the 20S proteasome proteolysis activity. In terms of biological role, component of the proteasome core, a large protease complex with broad specificity involved in protein degradation. This Pyrobaculum islandicum (strain DSM 4184 / JCM 9189 / GEO3) protein is Proteasome subunit beta 2.